We begin with the raw amino-acid sequence, 77 residues long: U14-theraphotoxin-Cg1a 2 (77 aa).

A signal peptide spans 1–21 (MKTSVLLVILGIAAITVQCTA). Residues 22 to 49 (SESVKQDSLRTFVDAVLGWNAEMASEAR) constitute a propeptide that is removed on maturation. Cystine bridges form between Cys50-Cys64, Cys57-Cys69, and Cys63-Cys75. Lys77 is modified (lysine amide).

This sequence belongs to the neurotoxin 10 (Hwtx-1) family. 65 (Jztx-21) subfamily. Expressed by the venom gland.

It localises to the secreted. Functionally, probable ion channel inhibitor. This Chilobrachys guangxiensis (Chinese earth tiger tarantula) protein is U14-theraphotoxin-Cg1a 2.